A 368-amino-acid polypeptide reads, in one-letter code: MSKRDYYQVLGVPRTASEDDLKKAYRRCAMKYHPDRNPGDAAAEAAFKECKEAYEVLADTKKRKLYDTHGHAAFEHGVGSGNTPDMNDIFGDIFGNIFGGARASRRGADVGYMVELDLEEAVAGVERQIQIPTLVECTHCHGSGSEDGHVETCGTCRGSGQVRIQRGIFAMQQTCPHCGGRGVIIRNPCKVCNGAGRVEDHKTLSVKIPAGVDNGDRIRLSGEGEQGPDGVPPGDLYVEVRVREHPIFQRDGDDLHCEVPVRISQAALGDIVRVATLDGEAEIRIPAETQSGKLFRLRGKGVRSVRSRTEGDLYCRIVVETPVNLTAEQRKLLEQFEMTFAGEDARKHSPKSATFLDGVKSFWDRMTS.

A J domain is found at 5–70 (DYYQVLGVPR…KKRKLYDTHG (66 aa)). Residues 124 to 201 (GVERQIQIPT…CNGAGRVEDH (78 aa)) form a CR-type zinc finger. Positions 137, 140, 153, 156, 175, 178, 189, and 192 each coordinate Zn(2+). CXXCXGXG motif repeat units lie at residues 137 to 144 (CTHCHGSG), 153 to 160 (CGTCRGSG), 175 to 182 (CPHCGGRG), and 189 to 196 (CKVCNGAG).

It belongs to the DnaJ family. Homodimer. The cofactor is Zn(2+).

It localises to the cytoplasm. Functionally, participates actively in the response to hyperosmotic and heat shock by preventing the aggregation of stress-denatured proteins and by disaggregating proteins, also in an autonomous, DnaK-independent fashion. Unfolded proteins bind initially to DnaJ; upon interaction with the DnaJ-bound protein, DnaK hydrolyzes its bound ATP, resulting in the formation of a stable complex. GrpE releases ADP from DnaK; ATP binding to DnaK triggers the release of the substrate protein, thus completing the reaction cycle. Several rounds of ATP-dependent interactions between DnaJ, DnaK and GrpE are required for fully efficient folding. Also involved, together with DnaK and GrpE, in the DNA replication of plasmids through activation of initiation proteins. This Xylella fastidiosa (strain M23) protein is Chaperone protein DnaJ.